The chain runs to 833 residues: Mannosyl-oligosaccharide glucosidase (833 aa).

Topologically, residues 1-10 (MLISKSKMFK) are cytoplasmic. Residues 11 to 28 (TFWILTSIVLLASATVDI) form a helical; Signal-anchor for type II membrane protein membrane-spanning segment. At 29-833 (SKLQEFEEYQ…ALVVNILGRF (805 aa)) the chain is on the lumenal side. Substrate-binding residues include asparagine 42 and asparagine 122. Asparagine 42, asparagine 122, and asparagine 135 each carry an N-linked (GlcNAc...) asparagine glycan. A substrate-binding site is contributed by glutamate 143. Aspartate 601 serves as the catalytic Proton donor. Cysteine 669 and cysteine 685 form a disulfide bridge. Asparagine 787 carries an N-linked (GlcNAc...) asparagine glycan. Glutamate 804 acts as the Proton acceptor in catalysis.

This sequence belongs to the glycosyl hydrolase 63 family. In terms of processing, N-glycosylated.

The protein localises to the endoplasmic reticulum membrane. The enzyme catalyses N(4)-(alpha-D-Glc-(1-&gt;2)-alpha-D-Glc-(1-&gt;3)-alpha-D-Glc-(1-&gt;3)-alpha-D-Man-(1-&gt;2)-alpha-D-Man-(1-&gt;2)-alpha-D-Man-(1-&gt;3)-[alpha-D-Man-(1-&gt;2)-alpha-D-Man-(1-&gt;3)-[alpha-D-Man-(1-&gt;2)-alpha-D-Man-(1-&gt;6)]-alpha-D-Man-(1-&gt;6)]-beta-D-Man-(1-&gt;4)-beta-D-GlcNAc-(1-&gt;4)-beta-D-GlcNAc)-L-asparaginyl-[protein] + H2O = N(4)-(alpha-D-Glc-(1-&gt;3)-alpha-D-Glc-(1-&gt;3)-alpha-D-Man-(1-&gt;2)-alpha-D-Man-(1-&gt;2)-alpha-D-Man-(1-&gt;3)-[alpha-D-Man-(1-&gt;2)-alpha-D-Man-(1-&gt;3)-[alpha-D-Man-(1-&gt;2)-alpha-D-Man-(1-&gt;6)]-alpha-D-Man-(1-&gt;6)]-beta-D-Man-(1-&gt;4)-beta-D-GlcNAc-(1-&gt;4)-beta-D-GlcNAc)-L-asparaginyl-[protein] + beta-D-glucose. It functions in the pathway glycan metabolism; N-glycan degradation. With respect to regulation, miglitol is an effective inhibitor at 1 mM. In terms of biological role, cleaves the distal alpha 1,2-linked glucose residue from the Glc(3)Man(9)GlcNAc(2) oligosaccharide precursor highly specifically. Seems to play a role in beta-1,6-glucan synthesis. This chain is Mannosyl-oligosaccharide glucosidase (CWH41), found in Saccharomyces cerevisiae (strain ATCC 204508 / S288c) (Baker's yeast).